The sequence spans 390 residues: Ankyrin repeat domain-containing protein 63 (390 aa).

ANK repeat units lie at residues Ala11–Ile40, Gln46–Leu79, Arg83–Ala112, Ala116–Leu145, and Ala153–Ala182. Disordered regions lie at residues Ala181–Arg213 and Ala226–Ser245. A Phosphoserine modification is found at Ser193. A Phosphoserine modification is found at Ser304. The segment at Val320–Trp377 is disordered.

This is Ankyrin repeat domain-containing protein 63 from Mus musculus (Mouse).